Here is a 515-residue protein sequence, read N- to C-terminus: NADH-ubiquinone oxidoreductase chain 2 (515 aa).

5 consecutive transmembrane segments (helical) span residues 63–83 (WPIGIAAFGLCLLFLIKNSGS), 250–270 (VFIYGSYGATLQQIFFFCSIA), 299–319 (FVLVLMWNREGIQSLLIGLFI), 356–376 (AITFSITMFSYAGIPPLAGFC), and 379–399 (FYLFFAALGCGAYFLAPVGVV).

It belongs to the complex I subunit 2 family.

The protein resides in the mitochondrion inner membrane. It carries out the reaction a ubiquinone + NADH + 5 H(+)(in) = a ubiquinol + NAD(+) + 4 H(+)(out). Core subunit of the mitochondrial membrane respiratory chain NADH dehydrogenase (Complex I) that is believed to belong to the minimal assembly required for catalysis. Complex I functions in the transfer of electrons from NADH to the respiratory chain. The immediate electron acceptor for the enzyme is believed to be ubiquinone. The sequence is that of NADH-ubiquinone oxidoreductase chain 2 (ND2) from Beta vulgaris (Sugar beet).